Here is a 658-residue protein sequence, read N- to C-terminus: MSLPPEKASELKQLIHQQLSKMDVHGRIREILAETIREELAPDQHLSTEDLIKALRRRGIIDDVMKELNFVTDSVERELPSSPKQPICFDRQSTLKKTNIDPTRRYLYLQVLGGKAFLEHLQEPEPLPGQVCSTFTLCLHYRNQRFRSKPVPCACEPDFHDGFLLEVHRESLGDGTRMADSTTMLSISDPIHMVLIKTDIFGETTLVASYFLEWRSVLGSENGVTSLTVELMGVGTESKVSVGILNIKLEMYPPLNQTLSQEVVNTQLALERQKTAEKERLFLVYAKQWWREYLQIRPSHNSRLVKIFAQDENGVNRPVCSYVKPLRAGRLLDTPRQAARFVNVLGYERAPVIGGGGKQEQWCTLLAFLCRNKGDCEDHANLLCSLLLGYGLEAFVCVGTKAKGVPHAWVMTCGTDGTTTFWESLTGHRYIHKPTNPDEPPVAEQPKPLYPYRTIGCVFNHQMFLGNCQPSDAVETCVFDLNDESKWKPMSEEAIKSVCAPGATTSLPPFPPLCASTIDASVTSNEIEMQLRLLVSEHRKDLGLTTVWEDQLSYLLSPALASYEFERTTSISAGNEEFQDAIRRAVPDGHTFKGFPIHFVYRNARRAFATCLRSPFCEEIICCRGDQVRLAVRVRVFTYPESACAVWIMFACKYRSVL.

Ser74 and Ser82 each carry phosphoserine.

This sequence belongs to the CEP76 family. In terms of assembly, interacts with CCP110 and CEP97.

The protein resides in the cytoplasm. It is found in the cytoskeleton. It localises to the microtubule organizing center. The protein localises to the centrosome. Its subcellular location is the centriole. Its function is as follows. Centrosomal protein involved in regulation of centriole duplication. Required to limit centriole duplication to once per cell cycle by preventing centriole reduplication. The protein is Centrosomal protein of 76 kDa (CEP76) of Pongo abelii (Sumatran orangutan).